The primary structure comprises 111 residues: Small ribosomal subunit protein bS6 (111 aa).

The protein belongs to the bacterial ribosomal protein bS6 family.

In terms of biological role, binds together with bS18 to 16S ribosomal RNA. This Francisella philomiragia subsp. philomiragia (strain ATCC 25017 / CCUG 19701 / FSC 153 / O#319-036) protein is Small ribosomal subunit protein bS6.